The chain runs to 337 residues: MKIAIVNDMPLAVEALRRAVALEPAHQVVWVASNGAEAVQRCTEQLPDLILMDLIMPVMDGVEATRRIMAETPCAIVIVTVDRKQNVHRVFEAMGHGALDVVDTPALGAGDAREAAAPLLRKILNIGWLVGQQRAPAARSVAAPLREASQRRGLVAIGSSAGGPAALEVLLKGLPAAFPAAIVLVQHVDQVFAAGMAEWLSSAAGLPVRLAREGEPPQPGQVLLAGTNHHIRLLQNGQLAYTAEPVNEIYRPSIDVFFESVARYWNGDAVGVLLTGMGRDGAQGLKLMRQQGFLTIAQDQASSAVYGMPKAAAAIDAAVEIRPLERIAGRLTEFFAK.

The region spanning 2 to 119 is the Response regulatory domain; sequence KIAIVNDMPL…GDAREAAAPL (118 aa). A 4-aspartylphosphate modification is found at aspartate 53. In terms of domain architecture, CheB-type methylesterase spans 144-337; it reads PLREASQRRG…AGRLTEFFAK (194 aa). Active-site residues include serine 160, histidine 187, and aspartate 280.

Belongs to the CheB family. Post-translationally, phosphorylated by CheA. Phosphorylation of the N-terminal regulatory domain activates the methylesterase activity.

It localises to the cytoplasm. It carries out the reaction [protein]-L-glutamate 5-O-methyl ester + H2O = L-glutamyl-[protein] + methanol + H(+). The enzyme catalyses L-glutaminyl-[protein] + H2O = L-glutamyl-[protein] + NH4(+). In terms of biological role, involved in chemotaxis. Part of a chemotaxis signal transduction system that modulates chemotaxis in response to various stimuli. Catalyzes the demethylation of specific methylglutamate residues introduced into the chemoreceptors (methyl-accepting chemotaxis proteins or MCP) by CheR. Also mediates the irreversible deamidation of specific glutamine residues to glutamic acid. The sequence is that of Protein-glutamate methylesterase/protein-glutamine glutaminase of group 3 operon from Pseudomonas putida (strain ATCC 47054 / DSM 6125 / CFBP 8728 / NCIMB 11950 / KT2440).